Reading from the N-terminus, the 163-residue chain is Lipoprotein signal peptidase (163 aa).

Helical transmembrane passes span 3-23, 70-90, and 94-114; these read IPLIYNRILILFFFIANIIIL, NYILCLISSIAILIILKTMYN, and IENFFYNIPSAFIISGAIGNF. Catalysis depends on residues Asp-125 and Asp-143. The helical transmembrane segment at 134–154 threads the bilayer; the sequence is WHFATFNIADVSIFIGSVLFI.

This sequence belongs to the peptidase A8 family.

The protein localises to the cell membrane. It catalyses the reaction Release of signal peptides from bacterial membrane prolipoproteins. Hydrolyzes -Xaa-Yaa-Zaa-|-(S,diacylglyceryl)Cys-, in which Xaa is hydrophobic (preferably Leu), and Yaa (Ala or Ser) and Zaa (Gly or Ala) have small, neutral side chains.. It participates in protein modification; lipoprotein biosynthesis (signal peptide cleavage). In terms of biological role, this protein specifically catalyzes the removal of signal peptides from prolipoproteins. The protein is Lipoprotein signal peptidase of Buchnera aphidicola subsp. Baizongia pistaciae (strain Bp).